A 455-amino-acid polypeptide reads, in one-letter code: tRNA modification GTPase MnmE (455 aa).

(6S)-5-formyl-5,6,7,8-tetrahydrofolate-binding residues include arginine 24, glutamate 81, and lysine 121. The TrmE-type G domain occupies 217-378 (GMKVVIAGRP…LKEHLKDIMG (162 aa)). Position 227 (asparagine 227) interacts with K(+). Residues 227–232 (NAGKSS), 246–252 (TDIAGTT), 271–274 (DTAG), and 336–339 (NKAD) each bind GTP. Residue serine 231 coordinates Mg(2+). 3 residues coordinate K(+): threonine 246, isoleucine 248, and threonine 251. Residue threonine 252 participates in Mg(2+) binding. (6S)-5-formyl-5,6,7,8-tetrahydrofolate is bound at residue lysine 455.

The protein belongs to the TRAFAC class TrmE-Era-EngA-EngB-Septin-like GTPase superfamily. TrmE GTPase family. Homodimer. Heterotetramer of two MnmE and two MnmG subunits. The cofactor is K(+).

The protein localises to the cytoplasm. In terms of biological role, exhibits a very high intrinsic GTPase hydrolysis rate. Involved in the addition of a carboxymethylaminomethyl (cmnm) group at the wobble position (U34) of certain tRNAs, forming tRNA-cmnm(5)s(2)U34. This is tRNA modification GTPase MnmE from Psychromonas ingrahamii (strain DSM 17664 / CCUG 51855 / 37).